Here is a 911-residue protein sequence, read N- to C-terminus: DNA ligase 4 (911 aa).

Residues Glu-271, Thr-272, Lys-273, Leu-274, Arg-278, Glu-331, Lys-345, Phe-367, Glu-427, Lys-432, Lys-449, and Lys-451 each contribute to the ATP site. Lys-273 serves as the catalytic N6-AMP-lysine intermediate. A Mg(2+)-binding site is contributed by Glu-331. Position 427 (Glu-427) interacts with Mg(2+). The segment at 610 to 620 (LASKHLYIGGD) is required for catalytic activity. 2 BRCT domains span residues 654–743 (KISN…PRFM) and 808–911 (SPLS…QYLI).

The protein belongs to the ATP-dependent DNA ligase family. Interacts with XRCC4; the LIG4-XRCC4 subcomplex has a 1:2 stoichiometry and XRCC4 is required for LIG4 stability. Component of the core long-range non-homologous end joining (NHEJ) complex (also named DNA-PK complex) composed of PRKDC, LIG4, XRCC4, XRCC6/Ku70, XRCC5/Ku86 and NHEJ1/XLF. Additional component of the NHEJ complex includes PAXX. Following autophosphorylation, PRKDC dissociates from DNA, leading to formation of the short-range NHEJ complex, composed of LIG4, XRCC4, XRCC6/Ku70, XRCC5/Ku86 and NHEJ1/XLF. Interacts with DCLRE1C; the interaction is direct. Interacts with APLF. Requires Mg(2+) as cofactor. Testis, thymus, prostate and heart.

The protein resides in the nucleus. It catalyses the reaction ATP + (deoxyribonucleotide)n-3'-hydroxyl + 5'-phospho-(deoxyribonucleotide)m = (deoxyribonucleotide)n+m + AMP + diphosphate.. DNA ligase involved in DNA non-homologous end joining (NHEJ); required for double-strand break (DSB) repair and V(D)J recombination. Catalyzes the NHEJ ligation step of the broken DNA during DSB repair by resealing the DNA breaks after the gap filling is completed. Joins single-strand breaks in a double-stranded polydeoxynucleotide in an ATP-dependent reaction. LIG4 is mechanistically flexible: it can ligate nicks as well as compatible DNA overhangs alone, while in the presence of XRCC4, it can ligate ends with 2-nucleotides (nt) microhomology and 1-nt gaps. Forms a subcomplex with XRCC4; the LIG4-XRCC4 subcomplex is responsible for the NHEJ ligation step and XRCC4 enhances the joining activity of LIG4. Binding of the LIG4-XRCC4 complex to DNA ends is dependent on the assembly of the DNA-dependent protein kinase complex DNA-PK to these DNA ends. LIG4 regulates nuclear localization of XRCC4. The chain is DNA ligase 4 from Homo sapiens (Human).